The following is a 512-amino-acid chain: Acid-sensing ion channel 2 (512 aa).

At 1–42 (MDLKESPSEGSLQPSSIQIFANTSTLHGIRHIFVYGPLTIRR) the chain is on the cytoplasmic side. Phosphoserine occurs at positions 8 and 11. The helical transmembrane segment at 43-64 (VLWAVAFVGSLGLLLVESSERV) threads the bilayer. Topologically, residues 65–424 (SYYFSYQHVT…ETIEQKKAYE (360 aa)) are extracellular. 6 disulfide bridges follow: Cys-92/Cys-193, Cys-289/Cys-364, Cys-307/Cys-360, Cys-311/Cys-358, Cys-320/Cys-342, and Cys-322/Cys-334. N-linked (GlcNAc...) asparagine glycans are attached at residues Asn-365 and Asn-392. Residues 425–439 (VAALLGDIGGQMGLF) traverse the membrane as a helical segment. Residues 440 to 512 (IGASILTILE…TLGTLEEIAC (73 aa)) are Cytoplasmic-facing. A GAS motif; ion selectivity filter motif is present at residues 441-443 (GAS).

The protein belongs to the amiloride-sensitive sodium channel (TC 1.A.6) family. ASIC2 subfamily. Can form homotrimers. Heterotrimer; forms functional heterotrimers producing channel with different properties. Forms heterotrimers with ASIC1; while ASIC1 determines current amplitude, ASIC2 influences the properties of the current. Forms heterotrimers with ASIC3; resulting in channels with distinct properties. Interacts with STOM; STOM regulates the gating of ASIC2-containing channels. Interacts with PICK1; promotes ASIC3 phosphorylation by PKC and activation of ASIC2/ASIC3 heterotrimers. Expressed in brain, cerebellum, trigeminal sensory ganglia and also detected in testis.

It localises to the cell membrane. The catalysed reaction is Na(+)(in) = Na(+)(out). It carries out the reaction K(+)(in) = K(+)(out). The enzyme catalyses Li(+)(in) = Li(+)(out). Inhibited by the diuretic drug amiloride. Inhibited by gadolinium ions, the heterotrimer with ASIC3 being more sensitive. Heterotrimer composed of ASIC1 and ASIC2 are inhibited by the snake venom mambalgin-1. Functionally, forms pH-gated trimeric sodium channels that act as postsynaptic excitatory sensors in the nervous system. Upon extracellular acidification, these channels generate rapid, transient inward currents that fully desensitize. Highly selective for sodium, they are permeable to other cations. By forming heterotrimeric channels with ASIC1, could contribute to synaptic plasticity, learning, and memory. Additionally, as acid sensors at nerve terminals, plays a role in mechanosensation and phototransduction. This is Acid-sensing ion channel 2 from Homo sapiens (Human).